Reading from the N-terminus, the 715-residue chain is Fatty acid oxidation complex subunit alpha (715 aa).

An enoyl-CoA hydratase region spans residues 8-197 (NSQPSAFSLT…NLGLVEEAVP (190 aa)). The tract at residues 313-715 (ATIKKVGVLG…MANEEQSFYS (403 aa)) is 3-hydroxyacyl-CoA dehydrogenase.

It in the N-terminal section; belongs to the enoyl-CoA hydratase/isomerase family. This sequence in the central section; belongs to the 3-hydroxyacyl-CoA dehydrogenase family. In terms of assembly, heterotetramer of two alpha chains (FadJ) and two beta chains (FadI).

Its subcellular location is the cytoplasm. It carries out the reaction a (3S)-3-hydroxyacyl-CoA = a (2E)-enoyl-CoA + H2O. It catalyses the reaction a 4-saturated-(3S)-3-hydroxyacyl-CoA = a (3E)-enoyl-CoA + H2O. The catalysed reaction is a (3S)-3-hydroxyacyl-CoA + NAD(+) = a 3-oxoacyl-CoA + NADH + H(+). The enzyme catalyses (3S)-3-hydroxybutanoyl-CoA = (3R)-3-hydroxybutanoyl-CoA. It functions in the pathway lipid metabolism; fatty acid beta-oxidation. In terms of biological role, catalyzes the formation of a hydroxyacyl-CoA by addition of water on enoyl-CoA. Also exhibits 3-hydroxyacyl-CoA epimerase and 3-hydroxyacyl-CoA dehydrogenase activities. The polypeptide is Fatty acid oxidation complex subunit alpha (Photobacterium profundum (strain SS9)).